The following is a 70-amino-acid chain: Sec-independent protein translocase protein TatA (70 aa).

The chain crosses the membrane as a helical span at residues M1–A21.

The protein belongs to the TatA/E family. The Tat system comprises two distinct complexes: a TatABC complex, containing multiple copies of TatA, TatB and TatC subunits, and a separate TatA complex, containing only TatA subunits. Substrates initially bind to the TatABC complex, which probably triggers association of the separate TatA complex to form the active translocon.

The protein localises to the cell inner membrane. Functionally, part of the twin-arginine translocation (Tat) system that transports large folded proteins containing a characteristic twin-arginine motif in their signal peptide across membranes. TatA could form the protein-conducting channel of the Tat system. The polypeptide is Sec-independent protein translocase protein TatA (Campylobacter curvus (strain 525.92)).